The chain runs to 1000 residues: MVQSPMISCPLKQTNEIDWIQPLKDYIRQSYGEDPERYSQECATLNRLRQDMRGAGKDSATGRDLLYRYYGQLELLDLRFPVDENHIKISFTWYDAFTHKPTSQYSLAFEKASIIFNISAVLSCHAANQNRADDIGLKTAYHNFQASAGMFTYINENFLHAPSTDLNRETVKTLINITLAQGQEVFLEKQIMDHKKAGFLAKLASQASYLYAQAIEGTQEHAKGIFDKSWVTLLQVKSAHMGSVASYYQALADGESGSHGVAVARLQLAEKHSTSALSWAKSLPSSISPNTNLTSEAGPSLVDIVKFHLANVQSQLATFVKDNDFIYHQPVPSEAGLSAVSKLPAAKAIPVSELYQGQDIQRIIGPDIFQKLVPMSVTETASLYDEEKAKLIRAETEKVETADGEMAASLDYFKLPGSLNILKGGMDQEVMVDEEFQRWCQELAGHDSFAKAFDTLQDRKSEVLATLDQCAKQLDLEESVCEKMRSKYGADWSQQPSSRLNMTLRNDIRTYRDTVHEASASDAQLSATLRQYESDFDEMRSAGETDEADVLFQRAMIKAGSKQGKTKNGVTSPYSATEGSLLDDVYDDGVPSVAEQIARVESILKKLNLVKRERTQVLKDLKEKVRNDDISNVLILNKKSITGQESQLFEAELEKFHPHQMRIVQANHKQTALMKELTKTYGDLLQDKRVRAEQSKYESITRQRNSVMARYKKIYDSFNNLGSGIKQAQTFYAEMTETVDSLKKNVDTFINNRRSEGAQLLGQIEREKAAGTSDHEEREREKLRQLMERLSTEPKPPSVPPGSSTAGPAKAKSPPPPVKAPAYPTNIAPPKASPHFAPTVPQQHGTPVSHSPAPYSQYVPPGAGVSYLPSQSFQQGAAAPLSEGYNPMAYPIPASSMSPPPSQPFYSPTPTPFYTSPTPPVPSGQYMPQGYVPPPPPPRPQQPTYPPSTGPFPSGPGGYAQSRPYGSSQHHKAHSQSSPQTGPSVSANSSDPWAGLNAWK.

The 402-residue stretch at P5–M406 folds into the BRO1 domain. Residues Y732–E793 are a coiled coil. Disordered regions lie at residues L760–Q857 and P891–K1000. The span at I764–T792 shows a compositional bias: basic and acidic residues. Residues V840–S849 show a composition bias toward polar residues. Pro residues-rich tracts occupy residues S898–P922 and Y931–S954. The segment covering T981–D991 has biased composition (polar residues).

This sequence belongs to the BRO1 family.

It is found in the cytoplasm. The protein localises to the endosome. Involved in concentration and sorting of cargo proteins of the multivesicular body (MVB) for incorporation into intralumenal vesicles. The protein is Vacuolar protein-sorting protein bro1 (broA) of Emericella nidulans (strain FGSC A4 / ATCC 38163 / CBS 112.46 / NRRL 194 / M139) (Aspergillus nidulans).